The primary structure comprises 296 residues: Low affinity immunoglobulin gamma Fc region receptor II (296 aa).

The signal sequence occupies residues 1–42 (MGIPSFLAFPAARRNRAHCTPWHPWGHMLLWTALLFLAPVSG). Over 43-225 (KPDLPKAVVT…SSSSGPSSMT (183 aa)) the chain is Extracellular. Ig-like C2-type domains lie at 47–129 (PKAV…DVIS) and 130–212 (DWLL…VNIT). Cystine bridges form between C70-C112 and C151-C195. N-linked (GlcNAc...) asparagine glycosylation is found at N79, N86, N105, N179, N186, and N210. A helical transmembrane segment spans residues 226–246 (AVAIGTCFAAVAIVAAIITWF). Over 247–296 (RLRRKPISAGLTDAENDAARTEAENTVTYSLLSHPDVAEEDSESDYQKRL) the chain is Cytoplasmic. Positions 273 to 278 (VTYSLL) match the ITIM motif motif. Y275 carries the post-translational modification Phosphotyrosine; by SRC-type Tyr-kinases. A Phosphoserine modification is found at S288. Y292 carries the post-translational modification Phosphotyrosine.

Interacts with FGR and LYN. Post-translationally, phosphorylated by SRC-type Tyr-kinases such as LYN, BLK, FYN and SYK. As to expression, higher expression is found in macrophages than in neutrophils.

It localises to the cell membrane. In terms of biological role, binds to the Fc region of immunoglobulins gamma. Low affinity receptor. The sequence is that of Low affinity immunoglobulin gamma Fc region receptor II (FCGR2) from Bos taurus (Bovine).